The sequence spans 254 residues: 3-oxo-5-alpha-steroid 4-dehydrogenase 2 (254 aa).

4 helical membrane-spanning segments follow: residues 8–28, 72–92, 146–166, and 206–226; these read VPVL…LCFG, PRSL…AHYF, FSVG…SDCM, and LATW…FLGM.

The protein belongs to the steroid 5-alpha reductase family.

It localises to the microsome membrane. Its subcellular location is the endoplasmic reticulum membrane. It carries out the reaction a 3-oxo-5alpha-steroid + NADP(+) = a 3-oxo-Delta(4)-steroid + NADPH + H(+). The enzyme catalyses 17beta-hydroxy-5alpha-androstan-3-one + NADP(+) = testosterone + NADPH + H(+). It catalyses the reaction 5alpha-pregnane-3,20-dione + NADP(+) = progesterone + NADPH + H(+). Its function is as follows. Converts testosterone (T) into 5-alpha-dihydrotestosterone (DHT) and progesterone or corticosterone into their corresponding 5-alpha-3-oxosteroids. It plays a central role in sexual differentiation and androgen physiology. This chain is 3-oxo-5-alpha-steroid 4-dehydrogenase 2 (Srd5a2), found in Mus musculus (Mouse).